The following is a 336-amino-acid chain: Aspartate--ammonia ligase (336 aa).

It belongs to the class-II aminoacyl-tRNA synthetase family. AsnA subfamily.

It is found in the cytoplasm. The catalysed reaction is L-aspartate + NH4(+) + ATP = L-asparagine + AMP + diphosphate + H(+). It functions in the pathway amino-acid biosynthesis; L-asparagine biosynthesis; L-asparagine from L-aspartate (ammonia route): step 1/1. This chain is Aspartate--ammonia ligase, found in Clostridium perfringens (strain SM101 / Type A).